A 150-amino-acid chain; its full sequence is Large ribosomal subunit protein bL9 (150 aa).

This sequence belongs to the bacterial ribosomal protein bL9 family.

Its function is as follows. Binds to the 23S rRNA. This chain is Large ribosomal subunit protein bL9, found in Streptococcus sanguinis (strain SK36).